Consider the following 699-residue polypeptide: Elongation factor G (699 aa).

The 283-residue stretch at Glu-8 to Val-290 folds into the tr-type G domain. Residues Ala-17–Thr-24, Asp-88–His-92, and Asn-142–Asp-145 contribute to the GTP site.

It belongs to the TRAFAC class translation factor GTPase superfamily. Classic translation factor GTPase family. EF-G/EF-2 subfamily.

The protein resides in the cytoplasm. Its function is as follows. Catalyzes the GTP-dependent ribosomal translocation step during translation elongation. During this step, the ribosome changes from the pre-translocational (PRE) to the post-translocational (POST) state as the newly formed A-site-bound peptidyl-tRNA and P-site-bound deacylated tRNA move to the P and E sites, respectively. Catalyzes the coordinated movement of the two tRNA molecules, the mRNA and conformational changes in the ribosome. The polypeptide is Elongation factor G (Alkalilimnicola ehrlichii (strain ATCC BAA-1101 / DSM 17681 / MLHE-1)).